Consider the following 624-residue polypeptide: uncharacterized protein (624 aa).

The N-terminal stretch at 1–29 (MRFHRQGTAATVGVLLIVLLGFCWKLSES) is a signal peptide. 8 N-linked (GlcNAc...) asparagine glycosylation sites follow: Asn-68, Asn-150, Asn-219, Asn-366, Asn-441, Asn-447, Asn-464, and Asn-528. A disordered region spans residues 141–174 (LERRHGRFGNGTHGDHPKGPPPPPPPDEKDRGSQ).

It localises to the secreted. This is an uncharacterized protein from Saccharomyces cerevisiae (strain ATCC 204508 / S288c) (Baker's yeast).